A 476-amino-acid chain; its full sequence is PTS system N-acetylmuramic acid-specific EIIBC component (476 aa).

The PTS EIIB type-1 domain occupies 1–89; that stretch reads MATIDNAMIH…KASLGDNMSS (89 aa). The active-site Phosphocysteine intermediate; for EIIB activity is the C28. Residues 116-476 form the PTS EIIC type-1 domain; that stretch reads AKFATIFTPL…FFATKDVDLS (361 aa). 10 helical membrane-spanning segments follow: residues 118 to 138, 160 to 180, 186 to 206, 220 to 240, 265 to 285, 304 to 324, 337 to 357, 371 to 391, 396 to 416, and 443 to 463; these read FATI…LLGL, LIAY…ILIG, AFGG…LGYN, FFGL…AAIV, TLLI…VYLF, VLAG…FVPV, LFPV…ALYF, GAII…VTLP, FITA…IAYL, and VLPA…TGFI.

Its subcellular location is the cell inner membrane. It carries out the reaction N-acetyl-beta-D-muramate(out) + N(pros)-phospho-L-histidyl-[protein] = N-acetyl-beta-D-muramate 6-phosphate(in) + L-histidyl-[protein]. In terms of biological role, the phosphoenolpyruvate-dependent sugar phosphotransferase system (sugar PTS), a major carbohydrate active transport system, catalyzes the phosphorylation of incoming sugar substrates concomitantly with their translocation across the cell membrane. This system is involved in N-acetylmuramic acid (MurNAc) transport, yielding cytoplasmic MurNAc-6-P. Is also able to take up anhydro-N-acetylmuramic acid (anhMurNAc), but cannot phosphorylate the carbon 6, probably because of the 1,6-anhydro ring. In Pasteurella multocida (strain Pm70), this protein is PTS system N-acetylmuramic acid-specific EIIBC component (murP).